The sequence spans 161 residues: Phosphopantetheine adenylyltransferase (161 aa).

Residue Ser-10 participates in substrate binding. ATP contacts are provided by residues 10 to 11 and His-18; that span reads SF. Substrate contacts are provided by Lys-42, Ala-75, and Arg-89. Residues 90–92, Glu-100, and 125–131 contribute to the ATP site; these read GLR and LSPISSS.

It belongs to the bacterial CoaD family. As to quaternary structure, homohexamer. It depends on Mg(2+) as a cofactor.

The protein resides in the cytoplasm. It catalyses the reaction (R)-4'-phosphopantetheine + ATP + H(+) = 3'-dephospho-CoA + diphosphate. Its pathway is cofactor biosynthesis; coenzyme A biosynthesis; CoA from (R)-pantothenate: step 4/5. Functionally, reversibly transfers an adenylyl group from ATP to 4'-phosphopantetheine, yielding dephospho-CoA (dPCoA) and pyrophosphate. This is Phosphopantetheine adenylyltransferase from Streptococcus agalactiae serotype Ia (strain ATCC 27591 / A909 / CDC SS700).